A 224-amino-acid polypeptide reads, in one-letter code: ATP phosphoribosyltransferase (224 aa).

It belongs to the ATP phosphoribosyltransferase family. Short subfamily. In terms of assembly, heteromultimer composed of HisG and HisZ subunits.

The protein localises to the cytoplasm. The catalysed reaction is 1-(5-phospho-beta-D-ribosyl)-ATP + diphosphate = 5-phospho-alpha-D-ribose 1-diphosphate + ATP. Its pathway is amino-acid biosynthesis; L-histidine biosynthesis; L-histidine from 5-phospho-alpha-D-ribose 1-diphosphate: step 1/9. Functionally, catalyzes the condensation of ATP and 5-phosphoribose 1-diphosphate to form N'-(5'-phosphoribosyl)-ATP (PR-ATP). Has a crucial role in the pathway because the rate of histidine biosynthesis seems to be controlled primarily by regulation of HisG enzymatic activity. The chain is ATP phosphoribosyltransferase from Cupriavidus taiwanensis (strain DSM 17343 / BCRC 17206 / CCUG 44338 / CIP 107171 / LMG 19424 / R1) (Ralstonia taiwanensis (strain LMG 19424)).